Reading from the N-terminus, the 306-residue chain is MIKQKTLKHVVKTTGVGLHTGKKVTLTMRPASANDGIIYRRVDLNPVVEFFADPESVRDTQLCTCLVNENNIRISTIEHLNSALAAFGIDNVIIEVDAPEVPIMDGSASPFIFLLLNSGIKELNAPKKFLKLKETIRVQKDDKWAELSPYDGFRLDFSIDFKHPAIHENTQSYGFDFSAQTFILELSRARTFGFIKDIEYLQSKGLCLGGSFDCAIVMDDYRVLNEDGLRFEDEFVRHKMLDAIGDLFICGHNIIGAFSAFKSGHALNNQLLKAVLENQSAWEYVTFEHEEAPILFGHSLEMCFVR.

Zn(2+) is bound by residues His79, His238, and Asp242. His265 functions as the Proton donor in the catalytic mechanism.

Belongs to the LpxC family. Zn(2+) is required as a cofactor.

It catalyses the reaction a UDP-3-O-[(3R)-3-hydroxyacyl]-N-acetyl-alpha-D-glucosamine + H2O = a UDP-3-O-[(3R)-3-hydroxyacyl]-alpha-D-glucosamine + acetate. It participates in glycolipid biosynthesis; lipid IV(A) biosynthesis; lipid IV(A) from (3R)-3-hydroxytetradecanoyl-[acyl-carrier-protein] and UDP-N-acetyl-alpha-D-glucosamine: step 2/6. In terms of biological role, catalyzes the hydrolysis of UDP-3-O-myristoyl-N-acetylglucosamine to form UDP-3-O-myristoylglucosamine and acetate, the committed step in lipid A biosynthesis. This Hamiltonella defensa subsp. Acyrthosiphon pisum (strain 5AT) protein is UDP-3-O-acyl-N-acetylglucosamine deacetylase.